We begin with the raw amino-acid sequence, 345 residues long: Cell division control protein 2 homolog 2 (345 aa).

Residues 1–44 are disordered; that stretch reads MQVQVQEGQTACDGSLRPLPSAGPASFVPRSLRPAPLRGTSTPD. A Protein kinase domain is found at 46 to 328; that stretch reads YSRIEKVGEG…AYEALQHSYF (283 aa). Residues 52-60 and lysine 75 each bind ATP; that span reads VGEGSYGIV. Serine 56 carries the phosphoserine modification. Position 57 is a phosphotyrosine (tyrosine 57). Aspartate 168 functions as the Proton acceptor in the catalytic mechanism.

It belongs to the protein kinase superfamily. CMGC Ser/Thr protein kinase family. CDC2/CDKX subfamily. As to quaternary structure, forms a stable but non-covalent complex with a regulatory subunit and with a cyclin.

The enzyme catalyses L-seryl-[protein] + ATP = O-phospho-L-seryl-[protein] + ADP + H(+). The catalysed reaction is L-threonyl-[protein] + ATP = O-phospho-L-threonyl-[protein] + ADP + H(+). Its activity is regulated as follows. Phosphorylation at Ser-56 or Tyr-57 inactivates the enzyme. Probably involved in the control of the cell cycle. The sequence is that of Cell division control protein 2 homolog 2 (CRK2) from Trypanosoma brucei brucei.